A 129-amino-acid polypeptide reads, in one-letter code: MLHLHILSWVLAIILFIATYLNISKNQGGSPFFKPLHMILRLFMLLTLISGFWILIQSFMNGGANHMLLTLKMLCGVAVVGLMEVSIAKRKRHEQSHKMFWITMALIIITMVLGVILPLGPISKLFGIG.

Transmembrane regions (helical) follow at residues 1 to 21 (MLHL…ATYL), 36 to 56 (LHMI…WILI), 67 to 87 (MLLT…EVSI), and 99 to 119 (MFWI…ILPL).

This sequence belongs to the UPF0344 family.

The protein localises to the cell membrane. This is UPF0344 protein MW0851 from Staphylococcus aureus (strain MW2).